Reading from the N-terminus, the 459-residue chain is Trigger factor (459 aa).

The region spanning 166–245 (GDFANIDLTA…VNSVKAEELP (80 aa)) is the PPIase FKBP-type domain.

The protein belongs to the FKBP-type PPIase family. Tig subfamily.

It localises to the cytoplasm. The enzyme catalyses [protein]-peptidylproline (omega=180) = [protein]-peptidylproline (omega=0). Its function is as follows. Involved in protein export. Acts as a chaperone by maintaining the newly synthesized protein in an open conformation. Functions as a peptidyl-prolyl cis-trans isomerase. The sequence is that of Trigger factor from Bifidobacterium longum (strain NCC 2705).